A 278-amino-acid polypeptide reads, in one-letter code: Casein kinase II subunit beta (278 aa).

2 disordered regions span residues 1-22 and 78-111; these read MSQEFVEDYSRTGSSDDEDSGA and DEEEDEDDVVEEDEVDQEMQSNDGHDEGKRRNKS. The residue at position 2 (Ser2) is an N-acetylserine. Residue Ser2 is modified to Phosphoserine. Acidic residues predominate over residues 78-94; it reads DEEEDEDDVVEEDEVDQ.

Belongs to the casein kinase 2 subunit beta family. As to quaternary structure, tetramer composed of an alpha subunit, an alpha' subunit, one beta subunit and one beta' subunit. Interacts with FACT subunits POB3 and SPT16. interacts with YTA7. Post-translationally, phosphorylated by alpha subunit.

Functionally, regulatory subunit of casein kinase II/CK2. As part of the kinase complex regulates the basal catalytic activity of the alpha subunit a constitutively active serine/threonine-protein kinase that phosphorylates a large number of substrates containing acidic residues C-terminal to the phosphorylated serine or threonine. The chain is Casein kinase II subunit beta (CKB1) from Saccharomyces cerevisiae (strain ATCC 204508 / S288c) (Baker's yeast).